The chain runs to 426 residues: Serine--tRNA ligase (426 aa).

233 to 235 (TAE) lines the L-serine pocket. 264–266 (RSE) serves as a coordination point for ATP. Position 287 (E287) interacts with L-serine. 351–354 (EISS) is an ATP binding site. Residue S387 coordinates L-serine.

Belongs to the class-II aminoacyl-tRNA synthetase family. Type-1 seryl-tRNA synthetase subfamily. Homodimer. The tRNA molecule binds across the dimer.

It is found in the cytoplasm. It carries out the reaction tRNA(Ser) + L-serine + ATP = L-seryl-tRNA(Ser) + AMP + diphosphate + H(+). The enzyme catalyses tRNA(Sec) + L-serine + ATP = L-seryl-tRNA(Sec) + AMP + diphosphate + H(+). It functions in the pathway aminoacyl-tRNA biosynthesis; selenocysteinyl-tRNA(Sec) biosynthesis; L-seryl-tRNA(Sec) from L-serine and tRNA(Sec): step 1/1. In terms of biological role, catalyzes the attachment of serine to tRNA(Ser). Is also able to aminoacylate tRNA(Sec) with serine, to form the misacylated tRNA L-seryl-tRNA(Sec), which will be further converted into selenocysteinyl-tRNA(Sec). This is Serine--tRNA ligase from Francisella philomiragia subsp. philomiragia (strain ATCC 25017 / CCUG 19701 / FSC 153 / O#319-036).